The primary structure comprises 684 residues: MIDQYKHQQLRIGSVSPQQMSAWAKRILPNGEIVGEVTKPYTFHYKTNKPEKDGLFCERIFGPIKSGICACGNYRVIRDKKDDPKFCEQCGVEFIDSRIRRYQMGYIKLACLVTHAWYLKRLPSYIANLLDKPLKELESLVYGDVSFARPVVKKPTFLRLRGSFEYEIQSWKHSIPLFFTTRGFDIFRNREISSGAVAIREQLADLDLRIIMDYSLIEWKELGKEGSPDNENEWEDRKVGRRKNFLVRRIELAKHFIRTNIEPEWMVLCLLPVLPPELRPIIQVDGGKLMSSDINELYRRVIYRNNTLIDLLTTSRSTPGELVICQEKLVQEAVDTLLDNGIRGQPMRDGHNKVYKSFSDIIEGKEGRFRETLLGKRVDYSGRSVIIVGPSLSLHRCGLPGEIAIELFQTFLIRGLIRKHFASNIGIAKSKIRQKEPIVWEILQEVMQGHPVLLNRAPTLHRLGIQAFQPILVEGRAICLHPLVCKGFNADFDGDQMAVHVPLSLEAQAEARLLMFSHTNLLSPAIADPISVPTQDMLIGLYILTSGNRRGIYSNRYNPRNCRNLKNERIPNNNYKYTKKKEPFFCNSYDAIGAYQQKRITFDSPLWLRWRLDLRIISSREVPIEVHYESLGTYHEIYGHYLVVRSIKKQMRSIYIRTNVGHISFYREIEEAVQGFCRAYSYDI.

Zn(2+) is bound by residues C69, C71, C87, and C90. 3 residues coordinate Mg(2+): D491, D493, and D495.

This sequence belongs to the RNA polymerase beta' chain family. RpoC1 subfamily. As to quaternary structure, in plastids the minimal PEP RNA polymerase catalytic core is composed of four subunits: alpha, beta, beta', and beta''. When a (nuclear-encoded) sigma factor is associated with the core the holoenzyme is formed, which can initiate transcription. It depends on Mg(2+) as a cofactor. The cofactor is Zn(2+).

It is found in the plastid. The protein localises to the chloroplast. The catalysed reaction is RNA(n) + a ribonucleoside 5'-triphosphate = RNA(n+1) + diphosphate. Functionally, DNA-dependent RNA polymerase catalyzes the transcription of DNA into RNA using the four ribonucleoside triphosphates as substrates. The chain is DNA-directed RNA polymerase subunit beta' from Phaseolus vulgaris (Kidney bean).